The following is a 440-amino-acid chain: Gamma-aminobutyric acid receptor subunit pi (440 aa).

Positions 1–23 (MSYSLYLAFLCLSLLTQRTCIQG) are cleaved as a signal peptide. At 24–241 (NQVNVEVSRS…LVLQFELRRN (218 aa)) the chain is on the extracellular side. Asparagine 43, asparagine 102, and asparagine 145 each carry an N-linked (GlcNAc...) asparagine glycan. Cysteine 160 and cysteine 174 are disulfide-bonded. Asparagine 196 and asparagine 228 each carry an N-linked (GlcNAc...) asparagine glycan. A helical membrane pass occupies residues 242–262 (VLYFILETYVPSTFLVVLSWV). The Cytoplasmic portion of the chain corresponds to 263–270 (SFWISLDS). A helical transmembrane segment spans residues 271 to 290 (VPARTCIGVTTVLSMTTLMI). The Extracellular segment spans residues 291-301 (GSRTSLPNTNC). The helical transmembrane segment at 302–322 (FIKAIDVYLGICFSFVFGALL) threads the bilayer. Residues 323–419 (EYAVAHYSSL…NPSNVDRYSK (97 aa)) are Cytoplasmic-facing. A helical membrane pass occupies residues 420-440 (LLFPLIFMLANVFYWAYYMYF).

The protein belongs to the ligand-gated ion channel (TC 1.A.9) family. Gamma-aminobutyric acid receptor (TC 1.A.9.5) subfamily. GABRP sub-subfamily. As to quaternary structure, heteropentamer, formed by a combination of alpha (GABRA1-6), beta (GABRB1-3), gamma (GABRG1-3), delta (GABRD), epsilon (GABRE), rho (GABRR1-3), pi (GABRP) and theta (GABRQ) chains, each subunit exhibiting distinct physiological and pharmacological properties.

Its subcellular location is the cell membrane. The protein resides in the apical cell membrane. It catalyses the reaction chloride(in) = chloride(out). Pi subunit of the heteropentameric ligand-gated chloride channel gated by gamma-aminobutyric acid (GABA). GABA-gated chloride channels, also named GABA(A) receptors (GABAAR), consist of five subunits arranged around a central pore and contain GABA active binding site(s) located at the alpha and beta subunit interfaces. When activated by GABA, GABAARs selectively allow the flow of chloride anions across the cell membrane down their electrochemical gradient. Pi-containing GABAARs are mostly located in peripheral tissues. In the uterus, pi subunits modulate uterus contraction by altering the sensitivity of GABAARs to pregnanolone. In the lungs, pi-containing GABAARs contribute to pulmonary fluid transport via luminal secretion of chloride. This Mus musculus (Mouse) protein is Gamma-aminobutyric acid receptor subunit pi.